The sequence spans 988 residues: uncharacterized protein (988 aa).

Residues 1–17 (MIRLVFLFLLVVLSVEL) form the signal peptide. Positions 111-176 (YQNPSTFPST…SKLNQKSSKS (66 aa)) are disordered. Residues 114 to 140 (PSTFPSTTTASTTTSTTTMPPTYQTTT) show a composition bias toward low complexity. N-linked (GlcNAc...) asparagine glycans are attached at residues Asn247, Asn389, Asn529, and Asn601. Residues 690-710 (IMIFTIFSVLSALTCLMCMYL) form a helical membrane-spanning segment. The N-linked (GlcNAc...) asparagine glycan is linked to Asn720. Transmembrane regions (helical) follow at residues 721 to 741 (LTAV…AFII), 753 to 773 (LLFP…TVLI), 784 to 804 (VLIA…WLLL), 832 to 852 (MILL…IFAL), 864 to 884 (LMIS…LPLI), and 891 to 911 (TVMA…SHTG). The tract at residues 966–988 (RSEDTLRRNTSLYGTEGYELPTP) is disordered. N-linked (GlcNAc...) asparagine glycosylation occurs at Asn974.

The protein localises to the membrane. This is an uncharacterized protein from Caenorhabditis elegans.